Consider the following 350-residue polypeptide: Atypical chemokine receptor 4 (350 aa).

The Extracellular portion of the chain corresponds to 1 to 41 (MAVEYNQSTDYYYEENEMNDTHDYSQYEVICIKEEVRKFAK). Residues asparagine 6 and asparagine 19 are each glycosylated (N-linked (GlcNAc...) asparagine). Residues 42–66 (VFLPAFFTIAFIIGLAGNSTVVAIY) form a helical membrane-spanning segment. Residues 67 to 79 (AYYKKRRTKTDVY) are Cytoplasmic-facing. A helical transmembrane segment spans residues 80–99 (ILNLAVADLFLLFTLPFWAV). The Extracellular portion of the chain corresponds to 100-113 (NAVHGWVLGKIMCK). Cysteines 112 and 184 form a disulfide. Residues 114-135 (VTSALYTVNFVSGMQFLACIST) traverse the membrane as a helical segment. Topologically, residues 136–153 (DRYWAVTKAPSQSGVGKP) are cytoplasmic. Residues 154 to 175 (CWVICFCVWVAAILLSIPQLVF) traverse the membrane as a helical segment. At 176–199 (YTVNHKARCVPIFPYHLGTSMKAS) the chain is on the extracellular side. A helical membrane pass occupies residues 200–222 (IQILEICIGFIIPFLIMAVCYFI). Residues 223–241 (TAKTLIKMPNIKKSQPLKV) lie on the Cytoplasmic side of the membrane. Residues 242–265 (LFTVVIVFIVTQLPYNIVKFCQAI) traverse the membrane as a helical segment. Residues 266-283 (DIIYSLITDCDMSKRMDV) are Extracellular-facing. Residues 284 to 306 (AIQITESIALFHSCLNPVLYVFM) form a helical membrane-spanning segment. At 307–350 (GTSFKNYIMKVAKKYGSWRRQRQNVEEIPFESEDATEPTSTFSI) the chain is on the cytoplasmic side.

It belongs to the G-protein coupled receptor 1 family. Atypical chemokine receptor subfamily. In terms of assembly, forms heteromers with CXCR3. Interacts with ARRB1 and ARRB2. The Ser/Thr residues in the C-terminal cytoplasmic tail may be phosphorylated. In terms of tissue distribution, expressed in circumvallate and fungiform papillae, olfactory epithelium and lung. Lower expression in liver, kidney and tongue epithelium bearing no taste papillae. Very low expression in the cerebral cortex of the brain.

It localises to the early endosome. The protein localises to the recycling endosome. The protein resides in the cell membrane. Its function is as follows. Atypical chemokine receptor that controls chemokine levels and localization via high-affinity chemokine binding that is uncoupled from classic ligand-driven signal transduction cascades, resulting instead in chemokine sequestration, degradation, or transcytosis. Also known as interceptor (internalizing receptor) or chemokine-scavenging receptor or chemokine decoy receptor. Acts as a receptor for chemokines CCL2, CCL8, CCL13, CCL19, CCL21 and CCL25. Chemokine-binding does not activate G-protein-mediated signal transduction but instead induces beta-arrestin recruitment, leading to ligand internalization. Plays an important role in controlling the migration of immune and cancer cells that express chemokine receptors CCR7 and CCR9, by reducing the availability of CCL19, CCL21, and CCL25 through internalization. Negatively regulates CXCR3-induced chemotaxis. Regulates T-cell development in the thymus. In Bos taurus (Bovine), this protein is Atypical chemokine receptor 4 (ACKR4).